The primary structure comprises 714 residues: EtfAB:quinone oxidoreductase (714 aa).

A run of 6 helical transmembrane segments spans residues 25–45 (YEWL…FGFW), 87–107 (AGWM…AAGI), 125–145 (IGFS…VMVL), 164–184 (DGWI…IEGL), 207–227 (PFGW…MLMW), and 236–256 (MAIA…HIFA). 4Fe-4S ferredoxin-type domains follow at residues 293-324 (WKDL…LNPK) and 375-405 (YDVV…HIPK). 8 residues coordinate [4Fe-4S] cluster: Cys-302, Cys-305, Cys-308, Cys-312, Cys-386, Cys-389, Cys-392, and Cys-396.

Might constitute a membrane-associated complex with EtfA (Swol_0697), EtfB (Swol_0696), and the butyryl-CoA dehydrogenase Swol_1933 and/or Swol_2052. Requires [4Fe-4S] cluster as cofactor.

The protein localises to the cell membrane. The protein operates within lipid metabolism; butanoate metabolism. Functionally, oxidoreductase involved in syntrophic growth of S.wolfei with butyrate. Is presumed to link the electron flow from butyryl-CoA dehydrogenases to the membrane, in conjunction with the electron transfer flavoprotein EtfAB. May transfer electrons to the menaquinone pool of the membrane. The sequence is that of EtfAB:quinone oxidoreductase from Syntrophomonas wolfei subsp. wolfei (strain DSM 2245B / Goettingen).